Reading from the N-terminus, the 22-residue chain is Mu-conotoxin SxIIIA (22 aa).

3 disulfides stabilise this stretch: C2-C15, C3-C20, and C10-C21. A22 carries the alanine amide modification.

Belongs to the conotoxin M superfamily. Expressed by the venom duct.

The protein resides in the secreted. Its function is as follows. Mu-conotoxins block voltage-gated sodium channels (Nav). This synthetic toxin potently blocks rNav1.4/SCN4A (IC(50)= 7 nM). It also moderately blocks rNav1.1/SCN1A (IC(50)=370 nM), rNav1.2/SCN2A (IC(50)=1 uM), and mNav1.6/SCN6A (IC(50)=570 nM). It is noteworthy that coexpression of subunits beta-2 or beta-4 (but not beta-1 or beta-3) decrease by more that 10-fold the binding potency of the toxin to rNav1.6. It is also noteworthy that the toxin is 50-fold more potent on mouse Nav1.6 than on rat Nav1.6. In vivo, when injected intraperitoneally or subcutaneously in mice, causes motor impairment, paralysis and death. In Conus striolatus (Cone snail), this protein is Mu-conotoxin SxIIIA.